Consider the following 317-residue polypeptide: Probable F-box protein At2g36090 (317 aa).

Residues 25 to 74 (IESHILTRLDGATLASVSCASSHLHHLASNEILWSKICRSTWPSCSGGSR) form the F-box domain.

In Arabidopsis thaliana (Mouse-ear cress), this protein is Probable F-box protein At2g36090.